A 420-amino-acid chain; its full sequence is ATP phosphoribosyltransferase regulatory subunit (420 aa).

Belongs to the class-II aminoacyl-tRNA synthetase family. HisZ subfamily. In terms of assembly, heteromultimer composed of HisG and HisZ subunits.

Its subcellular location is the cytoplasm. It functions in the pathway amino-acid biosynthesis; L-histidine biosynthesis; L-histidine from 5-phospho-alpha-D-ribose 1-diphosphate: step 1/9. Functionally, required for the first step of histidine biosynthesis. May allow the feedback regulation of ATP phosphoribosyltransferase activity by histidine. The protein is ATP phosphoribosyltransferase regulatory subunit of Bacillus cereus (strain B4264).